We begin with the raw amino-acid sequence, 168 residues long: Large ribosomal subunit protein uL10 (168 aa).

Belongs to the universal ribosomal protein uL10 family. Part of the ribosomal stalk of the 50S ribosomal subunit. The N-terminus interacts with L11 and the large rRNA to form the base of the stalk. The C-terminus forms an elongated spine to which L12 dimers bind in a sequential fashion forming a multimeric L10(L12)X complex.

Functionally, forms part of the ribosomal stalk, playing a central role in the interaction of the ribosome with GTP-bound translation factors. The protein is Large ribosomal subunit protein uL10 of Paracidovorax citrulli (strain AAC00-1) (Acidovorax citrulli).